The sequence spans 671 residues: Bifunctional acetylxylan esterase/xylanase XynS20E (671 aa).

A signal peptide spans 1 to 19 (MRLGVALSTIAVLLTATSA). The interval 54-279 (QGAGRDIHVY…IQDIWDFVSQ (226 aa)) is acetylxylan esterase. The active-site Charge relay system is the Ser-152. N-linked (GlcNAc...) asparagine glycosylation occurs at Asn-238. The segment at 285-328 (PVSASGNGGGNTTPTNPSTGGNGNGNGGGNTTPTNPSTGGNGNG) is disordered. The span at 304-314 (GGNGNGNGGGN) shows a compositional bias: gly residues. 2 CBM10 domains span residues 335 to 374 (KCSSNITKQGYKCCASNCEVVYTDSDGDWGVENDQWCGCG) and 383 to 422 (TCSAKILQQGYKCCPSGCIIYYTDEDGTWGVNGEEWCGCG). Residue Asn-339 is glycosylated (N-linked (GlcNAc...) asparagine). Residues Asn-445 and Asn-483 are each glycosylated (N-linked (GlcNAc...) asparagine). The 201-residue stretch at 461–661 (TVTSNKVGDI…NNGGTSGTAD (201 aa)) folds into the GH11 domain. The active-site Nucleophile is Glu-555. The active-site Proton donor is Glu-648.

In the N-terminal section; belongs to the axeA family. It in the C-terminal section; belongs to the glycosyl hydrolase 11 (cellulase G) family.

It is found in the secreted. The catalysed reaction is Deacetylation of xylans and xylo-oligosaccharides.. It carries out the reaction Endohydrolysis of (1-&gt;4)-beta-D-xylosidic linkages in xylans.. It functions in the pathway glycan degradation; xylan degradation. Functionally, bifunctional acetylxylan esterase/xylanase involved in the hydrolysis of xylan, a major structural heterogeneous polysaccharide found in plant biomass representing the second most abundant polysaccharide in the biosphere, after cellulose. Degrades xylan from acetylxylan, beechwood, birchwood, and oat spelt, and releases acetate from 4-methylumbelliferyl acetate and beta-D-xylose tetraacetate. No activity is observed against carboxy methyl cellulose, beta-glucan, p-nitrophenol acetate, p-nitrophenol laurate, p-nitrophenol myristate, p-nitrophenol, palmitate, or beta-naphthol acetate. The polypeptide is Bifunctional acetylxylan esterase/xylanase XynS20E (xynS20E) (Neocallimastix patriciarum (Rumen fungus)).